We begin with the raw amino-acid sequence, 997 residues long: Burkholderia TALE-like protein 2 (997 aa).

One copy of the Cryptic repeat -1 repeat lies at 19–50; that stretch reads LSPLERIKIEKHYGGGATLAFISNQHDELAQV. Residues 51–83 form a Cryptic repeat 0 repeat; sequence LSRADILKIASYDCAAQALQAVLDCGPMLGKRG. 27 Core repeat repeats span residues 84-116, 117-147, 148-180, 181-213, 214-244, 245-277, 278-310, 311-343, 344-376, 377-409, 410-442, 443-475, 476-508, 509-539, 540-572, 573-605, 606-638, 639-671, 672-704, 705-737, 738-770, 771-803, 804-836, 837-869, 870-902, 903-935, and 936-967; these read FSRADIVRIAGNGGGAQALYSVLDVEPTLGKRG, FSQVDVVKIAGGGAQALHTVLEIGPTLGERG, FSRGDIVTIAGNNGGAQALQAVLELEPTLRERG, FNQADIVKIAGNGGGAQALQAVLDVEPALGKRG, FSRVDIAKIAGGGAQALQAVLGLEPTLRKRG, FHPTDIIKIAGNNGGAQALQAVLDLELMLRERG, FSQADIVKMASNIGGAQALQAVLNLEPALCERG, FSQPDIVKMAGNSGGAQALQAVLDLELAFRERG, FSQADIVKMASNIGGAQALQAVLELEPALHERG, FSQANIVKMAGNSGGAQALQAVLDLELVFRERG, FSQPEIVEMAGNIGGAQALHTVLDLELAFRERG, VRQADIVKIVGNNGGAQALQAVFELEPTLRERG, FNQATIVKIAANGGGAQALYSVLDVEPTLDKRG, FSRVDIVKIAGGGAQALHTAFELEPTLRKRG, FNPTDIVKIAGNKGGAQALQAVLELEPALRERG, FNQATIVKMAGNAGGAQALYSVLDVEPALRERG, FSQPEIVKIAGNIGGAQALHTVLELEPTLHKRG, FNPTDIVKIAGNSGGAQALQAVLELEPAFRERG, FGQPDIVKMASNIGGAQALQAVLELEPALRERG, FSQPDIVEMAGNIGGAQALQAVLELEPAFRERG, FSQSDIVKIAGNIGGAQALQAVLELEPTLRESD, FRQADIVNIAGNDGSTQALKAVIEHGPRLRQRG, FNRASIVKIAGNSGGAQALQAVLKHGPTLDERG, FNLTNIVKIAGNGGGAQALKAVIEHGPTLQQRG, FNLTDIVEMAGKGGGAQALKAVLEHGPTLRQRG, FNLIDIVEMASNTGGAQALKTVLEHGPTLRQRD, and LSLIDIVEIASNGGAQALKAVLKYGPVLMQAG. The segment at 84–967 is buD domain; the sequence is FSRADIVRIA…KYGPVLMQAG (884 aa). 4 ANK repeats span residues 772 to 801, 805 to 834, 838 to 867, and 871 to 900; these read RQADIVNIAGNDGSTQALKAVIEHGPRLRQ, NRASIVKIAGNSGGAQALQAVLKHGPTLDE, NLTNIVKIAGNGGGAQALKAVIEHGPTLQQ, and NLTDIVEMAGKGGGAQALKAVLEHGPTLRQ. The Cryptic repeat +1 repeat unit spans residues 968-997; it reads RSNEEIVHVAARRGGAGRIRKMVALLLERQ.

It belongs to the transcription activator-like effector (TALE) family. Bat subfamily.

Functionally, binds to DNA in a sequence-specific manner. This chain is Burkholderia TALE-like protein 2, found in Mycetohabitans rhizoxinica (strain DSM 19002 / CIP 109453 / HKI 454) (Paraburkholderia rhizoxinica).